We begin with the raw amino-acid sequence, 717 residues long: Probable cyclic nucleotide-gated ion channel 5 (717 aa).

Topologically, residues 1–102 (MAGKRENFVR…DKFLLYCNKL (102 aa)) are cytoplasmic. Residues 103–123 (FVASCILSVFVDPFFFYLPVI) traverse the membrane as a helical segment. Residues 124–136 (NAESKCLGIDRKL) are Extracellular-facing. A helical membrane pass occupies residues 137–157 (AITASTLRTFIDVFYLAHMAL). At 158–190 (QLRTAYIAPSSRVFGRGELVIDPAQIAKRYLQR) the chain is on the cytoplasmic side. Residues 191-211 (WFIIDFLSVLPLPQIVVWRFL) form a helical membrane-spanning segment. Residues 212–224 (QSSNGSDVLATKQ) are Extracellular-facing. A helical transmembrane segment spans residues 225 to 245 (ALLFIVLVQYIPRFLRVLPLT). At 246 to 265 (SELKRTAGVFAETAWAGAAY) the chain is on the cytoplasmic side. A helical transmembrane segment spans residues 266-286 (YLLLYMLASHIVGAFWYLLAL). Residues 287–391 (ERNDACWQEA…GQGLETSTYP (105 aa)) are Extracellular-facing. The helical transmembrane segment at 392 to 412 (MEIIFSISLAISGLILFALLI) threads the bilayer. Residues 413-717 (GNMQTYLQSL…KPPEPDFTAD (305 aa)) are Cytoplasmic-facing. Residues 498 to 628 (LFKS…TFRF) and glutamate 569 contribute to the a nucleoside 3',5'-cyclic phosphate site. Positions 614-629 (FRRLHSRQVQHTFRFY) are calmodulin-binding. One can recognise an IQ domain in the interval 634 to 663 (RTWAACFIQAAWRRYCKRKKMEEAEAEAAA).

The protein belongs to the cyclic nucleotide-gated cation channel (TC 1.A.1.5) family. Homotetramer or heterotetramer.

The protein resides in the cell membrane. Its function is as follows. Probable cyclic nucleotide-gated ion channel. The chain is Probable cyclic nucleotide-gated ion channel 5 (CNGC5) from Arabidopsis thaliana (Mouse-ear cress).